We begin with the raw amino-acid sequence, 670 residues long: ATP-dependent RNA helicase DDX18 (670 aa).

Polar residues-rich tracts occupy residues serine 31–aspartate 42 and valine 83–serine 105. Residues serine 31–glycine 169 are disordered. The span at methionine 117–proline 154 shows a compositional bias: basic and acidic residues. A Q motif motif is present at residues phenylalanine 179–histidine 207. In terms of domain architecture, Helicase ATP-binding spans isoleucine 210–tyrosine 385. Alanine 223 to threonine 230 is an ATP binding site. Residues aspartate 333–aspartate 336 carry the DEAD box motif. The Helicase C-terminal domain occupies glycine 399 to isoleucine 569.

The protein belongs to the DEAD box helicase family. DDX18/HAS1 subfamily. Interacts with NOL8; the interaction is RNA-dependent. Interacts with PRC2 complex components EZH2, SUZ2 and JARID2; these interactions prevent deposition of the repressive H3K27me3 mark onto rDNA in pluripotent cells.

The protein resides in the nucleus. Its subcellular location is the nucleolus. The protein localises to the chromosome. It catalyses the reaction ATP + H2O = ADP + phosphate + H(+). In terms of biological role, ATP-dependent RNA helicase that plays a role in the regulation of R-loop homeostasis in both endogenous R-loop-prone regions and at sites of DNA damage. At endogenous loci such as actively transcribed genes, may act as a helicase to resolve the formation of R-loop during transcription and prevent the interference of R-loop with DNA-replication machinery. Also participates in the removal of DNA-lesion-associated R-loop. Plays an essential role for establishing pluripotency during embryogenesis and for pluripotency maintenance in embryonic stem cells. Mechanistically, prevents the polycomb repressive complex 2 (PRC2) from accessing rDNA loci and protects the active chromatin status in nucleolus. The protein is ATP-dependent RNA helicase DDX18 (DDX18) of Homo sapiens (Human).